Reading from the N-terminus, the 189-residue chain is Glycerol-3-phosphate acyltransferase (189 aa).

The next 5 helical transmembrane spans lie at 1–21, 51–71, 77–97, 111–131, and 151–171; these read MFWLLAIFAYLLGSLSFAILL, LAVLTLLGDLCKGLAPVLIAH, LQQQAWVGLYAVLGHLFPLYF, MLLGLYPPAALLAIAAWALTF, and LLAWQEPEALLPMSVLTLLIV.

This sequence belongs to the PlsY family. In terms of assembly, probably interacts with PlsX.

It is found in the cell inner membrane. It catalyses the reaction an acyl phosphate + sn-glycerol 3-phosphate = a 1-acyl-sn-glycero-3-phosphate + phosphate. Its pathway is lipid metabolism; phospholipid metabolism. In terms of biological role, catalyzes the transfer of an acyl group from acyl-phosphate (acyl-PO(4)) to glycerol-3-phosphate (G3P) to form lysophosphatidic acid (LPA). This enzyme utilizes acyl-phosphate as fatty acyl donor, but not acyl-CoA or acyl-ACP. This chain is Glycerol-3-phosphate acyltransferase, found in Pseudomonas fluorescens (strain ATCC BAA-477 / NRRL B-23932 / Pf-5).